Consider the following 409-residue polypeptide: Elongation factor Tu (409 aa).

One can recognise a tr-type G domain in the interval 10–214; that stretch reads KPHVNIGTIG…AVDDNIPEPE (205 aa). The G1 stretch occupies residues 19 to 26; that stretch reads GHVDHGKT. 19–26 provides a ligand contact to GTP; the sequence is GHVDHGKT. Position 26 (Thr-26) interacts with Mg(2+). Residues 60 to 64 are G2; the sequence is GITIN. Positions 81-84 are G3; that stretch reads DCPG. GTP contacts are provided by residues 81-85 and 136-139; these read DCPGH and NKKD. The G4 stretch occupies residues 136-139; the sequence is NKKD. The interval 174–176 is G5; it reads SAL.

It belongs to the TRAFAC class translation factor GTPase superfamily. Classic translation factor GTPase family. EF-Tu/EF-1A subfamily. Monomer.

The protein resides in the cytoplasm. It carries out the reaction GTP + H2O = GDP + phosphate + H(+). Its function is as follows. GTP hydrolase that promotes the GTP-dependent binding of aminoacyl-tRNA to the A-site of ribosomes during protein biosynthesis. This Crocosphaera subtropica (strain ATCC 51142 / BH68) (Cyanothece sp. (strain ATCC 51142)) protein is Elongation factor Tu.